Consider the following 657-residue polypeptide: Glycogen debranching enzyme (657 aa).

The active-site Nucleophile is D336. E371 (proton donor) is an active-site residue. The disordered stretch occupies residues 460–479 (ANGEENRDGTNNNYSNNHGK).

The protein belongs to the glycosyl hydrolase 13 family.

It catalyses the reaction Hydrolysis of (1-&gt;6)-alpha-D-glucosidic linkages to branches with degrees of polymerization of three or four glucose residues in limit dextrin.. Its pathway is glycan degradation; glycogen degradation. In terms of biological role, removes maltotriose and maltotetraose chains that are attached by 1,6-alpha-linkage to the limit dextrin main chain, generating a debranched limit dextrin. The chain is Glycogen debranching enzyme from Escherichia coli O81 (strain ED1a).